The primary structure comprises 228 residues: PKHD-type hydroxylase xcc-b100_1388 (228 aa).

A Fe2OG dioxygenase domain is found at 78–180 (RIYPPLFNRY…RVASFFWIQS (103 aa)). Fe cation-binding residues include His-96, Asp-98, and His-161. Arg-171 serves as a coordination point for 2-oxoglutarate.

Fe(2+) serves as cofactor. It depends on L-ascorbate as a cofactor.

This chain is PKHD-type hydroxylase xcc-b100_1388, found in Xanthomonas campestris pv. campestris (strain B100).